The sequence spans 1145 residues: MDRKTRRANFKNLQPRLTRSTKAAADTLSLSNFFATPENAEEVPSCLADIPVQPDPPAPKIKPIRTSNVFEKPGPKPKKAPKLKASTVSTSSGARRGRGKSKQQPSISNFLRNEQIFAEVTAQHCMADNFSADDIEMALALSKSESEKHGRLRLHDDDDAVVDLLDDEEKSTERIRHKLQKYGFRTAAKEDYKSLAVLPVVASKGGRRGKWANRFTSLTLRNPDVQQKKLEEKVSALLGQEMRGKEPNGEDCCLTPYTVITAALKELRAEGESRILREPSEGPIDDLESYYVTDLFEVSRTPAHHLLKNWAAIQGRDFSPERETQKCRQLRQQHELVYAELERYYGDPQKLEEEVMQELDELEKLVADNMIEDDSVVINIVEAESSSTGSSPSKEPPDKRPKMTMEDKENLQPTTSKASLTVPAQSTRCTSPDLFADSEDEPDIVTTAISNEPEDVRNLSMKVYKNVSISERSSSVAEIEIVSSNDEPSQITTYEVFSSDEVKTVSNATQEKISFDDDFIDLTQEFDMVEFNESKPRTPNLIASSETDSNVDNLNGDTILDFSSQEVSCPISKELYAKYAKVETFPVWNAAAEEEDKIEFSLSMERDLKSSEQSSHQLGILTTPNDTEHSSSFSELNFSRNSLRRSVSLSTDLSFKSPLNWKMNSSAEKRVSPAASPYKQSDASVDLTQNSDDENDAILLSDEEINYSIWKGNKTVKDLDIGDDSSDSCFASPVTKKRAIPQFQTEEDLDAFLMDFSTDGNGSQGSHSPNKSALSKERAEFGILDAAPSQPFSLSELQSHADKEKSSDNEINWAEASFLDAPAKPLSRRSSHKFNELLAKISKPAHNSGDDFDEFDQMVFQSTKEAASSAGETSDMPQGLDLLLKGEIKTTAIPETRAPGNQTPIEPQQVDVDGNVYSVRVCHTPKPDFATLPESEILQQLYKYGIKPLKRKQAVKMLEFIYNQTHPIMKTAAVQDLPARSEPIVRSKSTPVIMERPHSQVAKSTSKTLKAIGTKKDLTFNDATGEELLRFSQSLAPSLCDDFETFVMQTNVTKKTPQPLVPLHIAWHNLICANPQLHESVLTYEPIDLQAVYLHLKHMGHRYDPKDLKTFFDRRCIIFRYELGAPGKQAERHVRRHTKKPSKRK.

The interval 48-108 is disordered; that stretch reads ADIPVQPDPP…GKSKQQPSIS (61 aa). Residues 321 to 372 adopt a coiled-coil conformation; sequence ERETQKCRQLRQQHELVYAELERYYGDPQKLEEEVMQELDELEKLVADNMIE. Residues 382–393 are compositionally biased toward low complexity; it reads EAESSSTGSSPS. Disordered regions lie at residues 382-442, 613-634, and 666-689; these read EAES…EDEP, QSSH…SSFS, and SAEK…DLTQ. Residues 395–410 are compositionally biased toward basic and acidic residues; the sequence is EPPDKRPKMTMEDKEN. 3 stretches are compositionally biased toward polar residues: residues 411–430, 613–633, and 678–689; these read LQPT…TRCT, QSSH…SSSF, and YKQSDASVDLTQ.

The protein belongs to the SLX4 family. In terms of assembly, forms a heterodimer with SLX1. Interacts with mei-9; catalytic subunit of the MEI-9-ERCC1 endonuclease.

The protein resides in the nucleus. Its function is as follows. Regulatory subunit that interacts with and increases the activity of different structure-specific endonucleases. Has several distinct roles in protecting genome stability by resolving diverse forms of deleterious DNA structures originating from replication and recombination intermediates and from DNA damage. Component of the SLX1-SLX4 structure-specific endonuclease that resolves DNA secondary structures generated during DNA repair and recombination. Has endonuclease activity towards branched DNA substrates, introducing single-strand cuts in duplex DNA close to junctions with ss-DNA. Interacts with the structure-specific MEI-9-ERCC1 endonuclease to generate meiotic crossovers. This is Structure-specific endonuclease subunit SLX4 (mus312) from Drosophila melanogaster (Fruit fly).